Here is a 150-residue protein sequence, read N- to C-terminus: 3-dehydroquinate dehydratase (150 aa).

The Proton acceptor role is filled by Y22. Positions 73, 79, and 86 each coordinate substrate. The active-site Proton donor is the H99. Substrate-binding positions include 100 to 101 (LS) and R110.

The protein belongs to the type-II 3-dehydroquinase family. Homododecamer.

The enzyme catalyses 3-dehydroquinate = 3-dehydroshikimate + H2O. The protein operates within metabolic intermediate biosynthesis; chorismate biosynthesis; chorismate from D-erythrose 4-phosphate and phosphoenolpyruvate: step 3/7. Catalyzes a trans-dehydration via an enolate intermediate. The chain is 3-dehydroquinate dehydratase from Dinoroseobacter shibae (strain DSM 16493 / NCIMB 14021 / DFL 12).